Here is a 296-residue protein sequence, read N- to C-terminus: Acetylglutamate kinase (296 aa).

Residues 69–70 (GG), Arg-91, and Asn-192 each bind substrate.

It belongs to the acetylglutamate kinase family. ArgB subfamily.

Its subcellular location is the cytoplasm. The catalysed reaction is N-acetyl-L-glutamate + ATP = N-acetyl-L-glutamyl 5-phosphate + ADP. Its pathway is amino-acid biosynthesis; L-arginine biosynthesis; N(2)-acetyl-L-ornithine from L-glutamate: step 2/4. Catalyzes the ATP-dependent phosphorylation of N-acetyl-L-glutamate. This chain is Acetylglutamate kinase, found in Ruthia magnifica subsp. Calyptogena magnifica.